The chain runs to 67 residues: MIIPIRCFTCGKVIGDKWETYLGFLQSEYSEGDALDALGLRRYCCRRMLLAHVDLIEKLLNYHPLEK.

Zn(2+) contacts are provided by Cys7, Cys10, Cys44, and Cys45.

Belongs to the archaeal Rpo10/eukaryotic RPB10 RNA polymerase subunit family. As to quaternary structure, component of the RNA polymerase I (Pol I), RNA polymerase II (Pol II) and RNA polymerase III (Pol III) complexes consisting of at least 13, 12 and 17 subunits, respectively.

It is found in the nucleus. Its function is as follows. DNA-dependent RNA polymerase catalyzes the transcription of DNA into RNA using the four ribonucleoside triphosphates as substrates. Common component of RNA polymerases I, II and III which synthesize ribosomal RNA precursors, mRNA precursors and many functional non-coding RNAs, and a small RNAs, such as 5S rRNA and tRNAs, respectively. Pol II is the central component of the basal RNA polymerase II transcription machinery. Pols are composed of mobile elements that move relative to each other. In Pol II, RBP10 is part of the core element with the central large cleft. The protein is DNA-directed RNA polymerases I, II, and III subunit RPABC5 of Caenorhabditis briggsae.